The chain runs to 166 residues: Cyanate hydratase (166 aa).

Residues R106, E109, and S132 contribute to the active site.

This sequence belongs to the cyanase family.

It carries out the reaction cyanate + hydrogencarbonate + 3 H(+) = NH4(+) + 2 CO2. In terms of biological role, catalyzes the reaction of cyanate with bicarbonate to produce ammonia and carbon dioxide. In Verticillium alfalfae (strain VaMs.102 / ATCC MYA-4576 / FGSC 10136) (Verticillium wilt of alfalfa), this protein is Cyanate hydratase.